The sequence spans 215 residues: Cytochrome b6 (215 aa).

The helical transmembrane segment at 32–52 threads the bilayer; that stretch reads IFYCLGGITLTCFLVQVATGF. C35 is a binding site for heme c. Heme b is bound by residues H86 and H100. The next 3 membrane-spanning stretches (helical) occupy residues 90–110, 116–136, and 186–206; these read ASMM…TGGF, LTWV…VTGY, and LHTF…FPMI. Heme b contacts are provided by H187 and H202.

This sequence belongs to the cytochrome b family. PetB subfamily. As to quaternary structure, the 4 large subunits of the cytochrome b6-f complex are cytochrome b6, subunit IV (17 kDa polypeptide, PetD), cytochrome f and the Rieske protein, while the 4 small subunits are PetG, PetL, PetM and PetN. The complex functions as a dimer. Heme b is required as a cofactor. Heme c serves as cofactor.

The protein localises to the plastid. Its subcellular location is the chloroplast thylakoid membrane. Its function is as follows. Component of the cytochrome b6-f complex, which mediates electron transfer between photosystem II (PSII) and photosystem I (PSI), cyclic electron flow around PSI, and state transitions. This chain is Cytochrome b6, found in Solanum bulbocastanum (Wild potato).